The primary structure comprises 227 residues: Translation initiation factor 6 (227 aa).

Belongs to the eIF-6 family.

Binds to the 50S ribosomal subunit and prevents its association with the 30S ribosomal subunit to form the 70S initiation complex. This chain is Translation initiation factor 6, found in Pyrococcus furiosus (strain ATCC 43587 / DSM 3638 / JCM 8422 / Vc1).